Consider the following 459-residue polypeptide: ATP-dependent protease ATPase subunit HslU (459 aa).

Residues Val-18, 60–65 (GVGKTE), Asp-269, Glu-337, and Arg-409 contribute to the ATP site.

It belongs to the ClpX chaperone family. HslU subfamily. As to quaternary structure, a double ring-shaped homohexamer of HslV is capped on each side by a ring-shaped HslU homohexamer. The assembly of the HslU/HslV complex is dependent on binding of ATP.

It localises to the cytoplasm. ATPase subunit of a proteasome-like degradation complex; this subunit has chaperone activity. The binding of ATP and its subsequent hydrolysis by HslU are essential for unfolding of protein substrates subsequently hydrolyzed by HslV. HslU recognizes the N-terminal part of its protein substrates and unfolds these before they are guided to HslV for hydrolysis. This is ATP-dependent protease ATPase subunit HslU from Myxococcus xanthus (strain DK1622).